Reading from the N-terminus, the 515-residue chain is ATP synthase subunit alpha (515 aa).

Residue 171–178 (GDRQTGKT) coordinates ATP.

Belongs to the ATPase alpha/beta chains family. In terms of assembly, F-type ATPases have 2 components, CF(1) - the catalytic core - and CF(0) - the membrane proton channel. CF(1) has five subunits: alpha(3), beta(3), gamma(1), delta(1), epsilon(1). CF(0) has three main subunits: a(1), b(2) and c(9-12). The alpha and beta chains form an alternating ring which encloses part of the gamma chain. CF(1) is attached to CF(0) by a central stalk formed by the gamma and epsilon chains, while a peripheral stalk is formed by the delta and b chains.

The protein resides in the cell membrane. The enzyme catalyses ATP + H2O + 4 H(+)(in) = ADP + phosphate + 5 H(+)(out). Functionally, produces ATP from ADP in the presence of a proton gradient across the membrane. The alpha chain is a regulatory subunit. The sequence is that of ATP synthase subunit alpha from Stenotrophomonas maltophilia (strain K279a).